Here is a 235-residue protein sequence, read N- to C-terminus: Small ribosomal subunit protein eS4 (235 aa).

An S4 RNA-binding domain is found at 43-114 (IPLLLIVRDM…DPHRFLRLIE (72 aa)).

Belongs to the eukaryotic ribosomal protein eS4 family.

This chain is Small ribosomal subunit protein eS4, found in Korarchaeum cryptofilum (strain OPF8).